Reading from the N-terminus, the 525-residue chain is Arabinose import ATP-binding protein AraG 2 (525 aa).

The segment at 1–25 (MTDTTIRARGAQAAGSPAGAGPLDA) is disordered. Residues 7-25 (RARGAQAAGSPAGAGPLDA) show a composition bias toward low complexity. 2 ABC transporter domains span residues 35-270 (LELD…MVGR) and 281-524 (REPG…LALP). 67-74 (GENGAGKS) serves as a coordination point for ATP.

It belongs to the ABC transporter superfamily. Arabinose importer (TC 3.A.1.2.2) family. As to quaternary structure, the complex is composed of two ATP-binding proteins (AraG), two transmembrane proteins (AraH) and a solute-binding protein (AraF).

Its subcellular location is the cell inner membrane. It carries out the reaction L-arabinose(out) + ATP + H2O = L-arabinose(in) + ADP + phosphate + H(+). Its function is as follows. Part of the ABC transporter complex AraFGH involved in arabinose import. Responsible for energy coupling to the transport system. The protein is Arabinose import ATP-binding protein AraG 2 of Burkholderia thailandensis (strain ATCC 700388 / DSM 13276 / CCUG 48851 / CIP 106301 / E264).